A 66-amino-acid polypeptide reads, in one-letter code: MPKMKTKKAAAKRFKITATGKLKHGVAGKRHRLMSHNAKYIRQNRGTSVGAKADEARVKKYLPYGL.

This sequence belongs to the bacterial ribosomal protein bL35 family.

In Hyphomonas neptunium (strain ATCC 15444), this protein is Large ribosomal subunit protein bL35.